We begin with the raw amino-acid sequence, 90 residues long: Protein E18 (90 aa).

A helical transmembrane segment spans residues proline 27 to valine 47.

It is found in the virion membrane. Functionally, component of the polyhedra envelope. Plays an essential role in the budded virus production. The sequence is that of Protein E18 (E18) from Autographa californica nuclear polyhedrosis virus (AcMNPV).